Consider the following 367-residue polypeptide: Anhydro-N-acetylmuramic acid kinase (367 aa).

Position 13–20 (13–20 (GTSMDGAD)) interacts with ATP.

Belongs to the anhydro-N-acetylmuramic acid kinase family.

It carries out the reaction 1,6-anhydro-N-acetyl-beta-muramate + ATP + H2O = N-acetyl-D-muramate 6-phosphate + ADP + H(+). It functions in the pathway amino-sugar metabolism; 1,6-anhydro-N-acetylmuramate degradation. It participates in cell wall biogenesis; peptidoglycan recycling. Functionally, catalyzes the specific phosphorylation of 1,6-anhydro-N-acetylmuramic acid (anhMurNAc) with the simultaneous cleavage of the 1,6-anhydro ring, generating MurNAc-6-P. Is required for the utilization of anhMurNAc either imported from the medium or derived from its own cell wall murein, and thus plays a role in cell wall recycling. In Neisseria gonorrhoeae (strain ATCC 700825 / FA 1090), this protein is Anhydro-N-acetylmuramic acid kinase.